The chain runs to 342 residues: SWR1-complex protein 5 (342 aa).

3 disordered regions span residues 1–126, 142–178, and 214–238; these read MAPT…PVTI, PRTS…DPDS, and LGEN…RMPR. Acidic residues-rich tracts occupy residues 8–20 and 33–43; these read LAED…DSDF and ISDDDDEEAGE. The segment covering 78-87 has biased composition (basic residues); sequence GEKRQKKTKT. A BCNT-C domain is found at 260–341; it reads NLSMASRLQA…RRARMAQAGK (82 aa).

This sequence belongs to the SWC5 family. Component of the SWR1 chromatin remodeling complex.

It is found in the nucleus. Component of the SWR1 complex which mediates the ATP-dependent exchange of histone H2A for the H2A variant H2A.Z leading to transcriptional regulation of selected genes by chromatin remodeling. Involved in chromosome stability. This chain is SWR1-complex protein 5 (crc-2), found in Neurospora crassa (strain ATCC 24698 / 74-OR23-1A / CBS 708.71 / DSM 1257 / FGSC 987).